We begin with the raw amino-acid sequence, 214 residues long: Large ribosomal subunit protein uL1 (214 aa).

Belongs to the universal ribosomal protein uL1 family. As to quaternary structure, component of the large ribosomal subunit.

The protein resides in the cytoplasm. Component of the large ribosomal subunit. The ribosome is a large ribonucleoprotein complex responsible for the synthesis of proteins in the cell. The sequence is that of Large ribosomal subunit protein uL1 (RPL10A) from Entamoeba histolytica (strain ATCC 30459 / HM-1:IMSS / ABRM).